We begin with the raw amino-acid sequence, 496 residues long: Acetyltransferase adrJ (496 aa).

Catalysis depends on proton acceptor residues His174 and Asp421.

It belongs to the plant acyltransferase family. As to quaternary structure, monomer.

The protein operates within secondary metabolite biosynthesis; terpenoid biosynthesis. Functionally, acetyltransferase; part of the gene cluster that mediates the biosynthesis of andrastins, meroterpenoid compounds that exhibit inhibitory activity against ras farnesyltransferase, suggesting that they could be promising leads for antitumor agents. The first step of the pathway is the synthesis of 3,5-dimethylorsellinic acid (DMOA) by the polyketide synthase adrD via condensation of one acetyl-CoA starter unit with 3 malonyl-CoA units and 2 methylations. DMAO is then converted to farnesyl-DMAO by the prenyltransferase adrG. The methyltransferase adrK catalyzes the methylation of the carboxyl group of farnesyl-DMAO to farnesyl-DMAO methyl ester which is further converted to epoxyfarnesyl-DMAO methyl ester by the FAD-dependent monooxygenase adrH. The terpene cyclase adrI then catalyzes the carbon skeletal rearrangement to generate the andrastin E, the first compound in the pathway having the andrastin scaffold, with the tetracyclic ring system. The post-cyclization tailoring enzymes adrF, adrE, adrJ, and adrA, are involved in the conversion of andrastin E into andrastin A. The short chain dehydrogenase adrF is responsible for the oxidation of the C-3 a hydroxyl group of andrastin E to yield the corresponding ketone, andrastin D. The ketoreductase adrE stereoselectively reduces the carbonyl moiety to reverse the stereochemistry of the C-3 position to yield andrastin F. The acetyltransferase adrJ is the acetyltransferase that attaches the acetyl group to the C-3 hydroxyl group of andrastin F to yield andrastin C. Finally, the cytochrome P450 monooxygenase adrA catalyzes two sequential oxidation reactions of the C-23 methyl group, to generate the corresponding alcohol andrastin B, and aldehyde andrastin A. The polypeptide is Acetyltransferase adrJ (Penicillium roqueforti).